The sequence spans 395 residues: Elongation factor Tu (395 aa).

The 195-residue stretch at 10 to 204 folds into the tr-type G domain; that stretch reads KPHCNIGTIG…TVDSYIPDPQ (195 aa). Positions 19–26 are G1; the sequence is GHVDHGKT. A GTP-binding site is contributed by 19-26; it reads GHVDHGKT. Threonine 26 serves as a coordination point for Mg(2+). Residues 61 to 65 form a G2 region; that stretch reads GITIS. The G3 stretch occupies residues 82–85; that stretch reads DCPG. Residues 82-86 and 137-140 each bind GTP; these read DCPGH and NKCD. Residues 137–140 form a G4 region; that stretch reads NKCD. Residues 173–175 are G5; that stretch reads SAL.

Belongs to the TRAFAC class translation factor GTPase superfamily. Classic translation factor GTPase family. EF-Tu/EF-1A subfamily. Monomer.

The protein localises to the cytoplasm. The enzyme catalyses GTP + H2O = GDP + phosphate + H(+). GTP hydrolase that promotes the GTP-dependent binding of aminoacyl-tRNA to the A-site of ribosomes during protein biosynthesis. In Agathobacter rectalis (strain ATCC 33656 / DSM 3377 / JCM 17463 / KCTC 5835 / VPI 0990) (Eubacterium rectale), this protein is Elongation factor Tu.